The following is a 454-amino-acid chain: Histidine--tRNA ligase (454 aa).

The protein belongs to the class-II aminoacyl-tRNA synthetase family. Homodimer.

It localises to the cytoplasm. It carries out the reaction tRNA(His) + L-histidine + ATP = L-histidyl-tRNA(His) + AMP + diphosphate + H(+). This is Histidine--tRNA ligase from Porphyromonas gingivalis (strain ATCC BAA-308 / W83).